The following is a 934-amino-acid chain: Glycine dehydrogenase (decarboxylating) (934 aa).

At Lys687 the chain carries N6-(pyridoxal phosphate)lysine.

It belongs to the GcvP family. The glycine cleavage system is composed of four proteins: P, T, L and H. Requires pyridoxal 5'-phosphate as cofactor.

The catalysed reaction is N(6)-[(R)-lipoyl]-L-lysyl-[glycine-cleavage complex H protein] + glycine + H(+) = N(6)-[(R)-S(8)-aminomethyldihydrolipoyl]-L-lysyl-[glycine-cleavage complex H protein] + CO2. Functionally, the glycine cleavage system catalyzes the degradation of glycine. The P protein binds the alpha-amino group of glycine through its pyridoxal phosphate cofactor; CO(2) is released and the remaining methylamine moiety is then transferred to the lipoamide cofactor of the H protein. This chain is Glycine dehydrogenase (decarboxylating), found in Nocardia farcinica (strain IFM 10152).